The primary structure comprises 363 residues: Phosphoserine aminotransferase (363 aa).

L-glutamate is bound at residue Arg-42. Residues 76 to 77, Trp-102, Thr-156, Asp-175, and Gln-198 contribute to the pyridoxal 5'-phosphate site; that span reads GR. Lys-199 carries the N6-(pyridoxal phosphate)lysine modification. 240–241 is a binding site for pyridoxal 5'-phosphate; it reads NT.

It belongs to the class-V pyridoxal-phosphate-dependent aminotransferase family. SerC subfamily. As to quaternary structure, homodimer. Pyridoxal 5'-phosphate serves as cofactor.

It localises to the cytoplasm. It carries out the reaction O-phospho-L-serine + 2-oxoglutarate = 3-phosphooxypyruvate + L-glutamate. The catalysed reaction is 4-(phosphooxy)-L-threonine + 2-oxoglutarate = (R)-3-hydroxy-2-oxo-4-phosphooxybutanoate + L-glutamate. The protein operates within amino-acid biosynthesis; L-serine biosynthesis; L-serine from 3-phospho-D-glycerate: step 2/3. Its pathway is cofactor biosynthesis; pyridoxine 5'-phosphate biosynthesis; pyridoxine 5'-phosphate from D-erythrose 4-phosphate: step 3/5. In terms of biological role, catalyzes the reversible conversion of 3-phosphohydroxypyruvate to phosphoserine and of 3-hydroxy-2-oxo-4-phosphonooxybutanoate to phosphohydroxythreonine. The sequence is that of Phosphoserine aminotransferase from Shewanella baltica (strain OS155 / ATCC BAA-1091).